Reading from the N-terminus, the 188-residue chain is Marginal zone B- and B1-cell-specific protein (188 aa).

Positions Met1–Ala20 are cleaved as a signal peptide. Cystine bridges form between Cys49–Cys177, Cys52–Cys170, and Cys94–Cys142. A Prevents secretion from ER motif is present at residues Arg185–Leu188.

Belongs to the MZB1 family. In terms of assembly, part of the ER chaperone complex, a multi-protein complex in the endoplasmic reticulum containing a large number of molecular chaperones which associates with unassembled incompletely folded immunoglobulin heavy chains. Interacts with HSP90B1 and PDIA3 in a calcium-dependent manner. In terms of processing, forms an interchain disulfide bond with IgM monomers. As to expression, expressed predominantly in the spleen and lymph nodes. Abundantly expressed in marginal zone B and B1 cells. High expression in mesenteric adipose tissue (MAT). Expressed also in pancreas, perigonadal adipose tissue (PAT), uterus, subcutaneous adipose tissue, heart, muscle, ovary and liver. Very low expression is detected in brown adipose tissue. In PAT, significantly higher expression in stromal-vascular cell than in adipocytes. Expressed in macrophage RAW 264.7 cell line. Down-regulated in For-knockout female MAT at 5 months (obese state) followed by steep up-regulation at 9 months (prediabetic condition) when mutants progress towards the metabolic syndrome.

It localises to the endoplasmic reticulum. It is found in the endoplasmic reticulum lumen. The protein localises to the secreted. Its function is as follows. Associates with immunoglobulin M (IgM) heavy and light chains and promotes IgM assembly and secretion. May exert its effect by acting as a molecular chaperone or as an oxidoreductase as it displays a low level of oxidoreductase activity. Helps to diversify peripheral B-cell functions by regulating Ca(2+) stores, antibody secretion and integrin activation. In terms of biological role, acts as a hormone-regulated adipokine/pro-inflammatory cytokine that is implicated in causing chronic inflammation, affecting cellular expansion and blunting insulin response in adipocytes. May have a role in the onset of insulin resistance. The polypeptide is Marginal zone B- and B1-cell-specific protein (Mzb1) (Mus musculus (Mouse)).